The chain runs to 588 residues: Snake venom 5'-nucleotidase (588 aa).

Residues 1-40 (MQTPKRRRGAQGCPRSSPSPPLLLLVGAVWFCAALSVAAG) form the signal peptide. Residues D51 and H53 each contribute to the Zn(2+) site. C66 and C71 form a disulfide bridge. A glycan (N-linked (GlcNAc...) asparagine) is linked at N88. Zn(2+)-binding residues include D99 and N131. N167 carries N-linked (GlcNAc...) asparagine glycosylation. Zn(2+)-binding residues include H234 and H257. 3 N-linked (GlcNAc...) asparagine glycosylation sites follow: N327, N347, and N361. 2 disulfide bridges follow: C367/C372 and C379/C401. R368 lines the AMP pocket. AMP is bound by residues N404 and R409. N418 carries an N-linked (GlcNAc...) asparagine glycan. AMP is bound at residue F432. C491 and C494 are disulfide-bonded. Residues F515 and D521 each coordinate AMP. N532 carries N-linked (GlcNAc...) asparagine glycosylation. S564 is lipidated: GPI-anchor amidated serine. Residues 565–588 (AGTLFQAQLFLTWGLCISLLYFIL) constitute a propeptide, removed in mature form.

It belongs to the 5'-nucleotidase family. Zn(2+) is required as a cofactor. Venom 5'-nucleotidases (or a part thereof) may be released into the venom via exosome-like vesicles. They may be attached via a GPI anchor to the membrane of these vesicles. Soluble forms of 5'-nucleotidase might be released by cleavage of the ectodomain in the exosome-like vesicles or venom gland cells. In terms of tissue distribution, expressed by the venom gland.

It localises to the membrane. The enzyme catalyses a ribonucleoside 5'-phosphate + H2O = a ribonucleoside + phosphate. Its function is as follows. Hydrolyzes nucleotides into nucleosides. Snake venom 5'-nucleotidases are widely distributed among venomous snake taxa, but there is a lack of information about their biological activities. They have been shown to inhibit platelet aggregation. This effect may be due to the liberation of inhibitory AMP or adenosine by its action on ADP released upon initiation of aggregation. Venom 5'-nucleotidases are also known to synergistically act in vivo with other toxins like ADPases, phospholipases, and disintegrins to exert a more pronounced anti-coagulant effect. The sequence is that of Snake venom 5'-nucleotidase from Gloydius brevicauda (Korean slamosa snake).